The chain runs to 568 residues: Oxygen-dependent choline dehydrogenase (568 aa).

Residue 8–37 coordinates FAD; that stretch reads DYVIIGGGSAGSVLGNRLTEDKDKEVLVLE. Histidine 473 functions as the Proton acceptor in the catalytic mechanism.

Belongs to the GMC oxidoreductase family. Requires FAD as cofactor.

The enzyme catalyses choline + A = betaine aldehyde + AH2. It carries out the reaction betaine aldehyde + NAD(+) + H2O = glycine betaine + NADH + 2 H(+). Its pathway is amine and polyamine biosynthesis; betaine biosynthesis via choline pathway; betaine aldehyde from choline (cytochrome c reductase route): step 1/1. In terms of biological role, involved in the biosynthesis of the osmoprotectant glycine betaine. Catalyzes the oxidation of choline to betaine aldehyde and betaine aldehyde to glycine betaine at the same rate. The protein is Oxygen-dependent choline dehydrogenase of Staphylococcus haemolyticus (strain JCSC1435).